We begin with the raw amino-acid sequence, 96 residues long: Large ribosomal subunit protein uL23 (96 aa).

It belongs to the universal ribosomal protein uL23 family. As to quaternary structure, part of the 50S ribosomal subunit. Contacts protein L29, and trigger factor when it is bound to the ribosome.

Its function is as follows. One of the early assembly proteins it binds 23S rRNA. One of the proteins that surrounds the polypeptide exit tunnel on the outside of the ribosome. Forms the main docking site for trigger factor binding to the ribosome. The chain is Large ribosomal subunit protein uL23 from Aster yellows witches'-broom phytoplasma (strain AYWB).